Here is a 213-residue protein sequence, read N- to C-terminus: Pyridoxine/pyridoxamine 5'-phosphate oxidase (213 aa).

Substrate contacts are provided by residues 8-11 (RKNY) and Lys66. FMN is bound by residues 61-66 (RIVLIK), 76-77 (FT), Arg82, Lys83, and Gln105. Substrate contacts are provided by Tyr123, Arg127, and Ser131. Residues 140–141 (QS) and Trp184 each bind FMN. Position 190–192 (190–192 (RLH)) interacts with substrate. Residue Arg194 participates in FMN binding.

Belongs to the pyridoxamine 5'-phosphate oxidase family. As to quaternary structure, homodimer. It depends on FMN as a cofactor.

The enzyme catalyses pyridoxamine 5'-phosphate + O2 + H2O = pyridoxal 5'-phosphate + H2O2 + NH4(+). It catalyses the reaction pyridoxine 5'-phosphate + O2 = pyridoxal 5'-phosphate + H2O2. The protein operates within cofactor metabolism; pyridoxal 5'-phosphate salvage; pyridoxal 5'-phosphate from pyridoxamine 5'-phosphate: step 1/1. It participates in cofactor metabolism; pyridoxal 5'-phosphate salvage; pyridoxal 5'-phosphate from pyridoxine 5'-phosphate: step 1/1. Functionally, catalyzes the oxidation of either pyridoxine 5'-phosphate (PNP) or pyridoxamine 5'-phosphate (PMP) into pyridoxal 5'-phosphate (PLP). The polypeptide is Pyridoxine/pyridoxamine 5'-phosphate oxidase (Paraburkholderia phytofirmans (strain DSM 17436 / LMG 22146 / PsJN) (Burkholderia phytofirmans)).